Reading from the N-terminus, the 307-residue chain is UDP-3-O-acyl-N-acetylglucosamine deacetylase (307 aa).

Positions 80, 239, and 243 each coordinate Zn(2+). Residue His-266 is the Proton donor of the active site.

Belongs to the LpxC family. It depends on Zn(2+) as a cofactor.

The catalysed reaction is a UDP-3-O-[(3R)-3-hydroxyacyl]-N-acetyl-alpha-D-glucosamine + H2O = a UDP-3-O-[(3R)-3-hydroxyacyl]-alpha-D-glucosamine + acetate. Its pathway is glycolipid biosynthesis; lipid IV(A) biosynthesis; lipid IV(A) from (3R)-3-hydroxytetradecanoyl-[acyl-carrier-protein] and UDP-N-acetyl-alpha-D-glucosamine: step 2/6. Its function is as follows. Catalyzes the hydrolysis of UDP-3-O-myristoyl-N-acetylglucosamine to form UDP-3-O-myristoylglucosamine and acetate, the committed step in lipid A biosynthesis. The protein is UDP-3-O-acyl-N-acetylglucosamine deacetylase of Neisseria gonorrhoeae (strain ATCC 700825 / FA 1090).